The primary structure comprises 1530 residues: DNA-directed RNA polymerase III subunit RPC1 (1530 aa).

7 residues coordinate Zn(2+): Cys-74, Cys-77, Cys-84, His-87, Cys-114, Cys-117, and Cys-161. The Mg(2+) site is built by Asp-503, Asp-505, and Asp-507. Residues 846-858 (PTEFFFHTMAGRE) are bridging helix. A compositionally biased stretch (basic and acidic residues) spans 992-1001 (EEQESREDAL). Disordered regions lie at residues 992–1016 (EEQESREDALHNSNGKTNDRESRPR) and 1057–1099 (NLLN…SKEG).

It belongs to the RNA polymerase beta' chain family. In terms of assembly, component of the RNA polymerase III (Pol III) complex consisting of 17 subunits.

Its subcellular location is the nucleus. It carries out the reaction RNA(n) + a ribonucleoside 5'-triphosphate = RNA(n+1) + diphosphate. In terms of biological role, DNA-dependent RNA polymerase catalyzes the transcription of DNA into RNA using the four ribonucleoside triphosphates as substrates. Largest and catalytic core component of RNA polymerase III which synthesizes small RNAs, such as 5S rRNA and tRNAs. Forms the polymerase active center together with the second largest subunit. A single-stranded DNA template strand of the promoter is positioned within the central active site cleft of Pol III. A bridging helix emanates from RPC1 and crosses the cleft near the catalytic site and is thought to promote translocation of Pol III by acting as a ratchet that moves the RNA-DNA hybrid through the active site by switching from straight to bent conformations at each step of nucleotide addition. This is DNA-directed RNA polymerase III subunit RPC1 from Trypanosoma brucei brucei.